Here is a 239-residue protein sequence, read N- to C-terminus: Probable transcriptional regulatory protein Bcer98_0465 (239 aa).

It belongs to the TACO1 family. YeeN subfamily.

The protein localises to the cytoplasm. The protein is Probable transcriptional regulatory protein Bcer98_0465 of Bacillus cytotoxicus (strain DSM 22905 / CIP 110041 / 391-98 / NVH 391-98).